The sequence spans 123 residues: MQRSTRQQAGREAEAFALQFLQRQGLRLIEQNWLCKRGELDLVMLDGDTVVFVEVRYRRHSGWGGAMESVDFRKQEKLVTAAQLFLQHATAWANHPCRFDVIAIEGEPGNAAPLNWIKSAFDS.

It belongs to the UPF0102 family.

This Pseudomonas syringae pv. syringae (strain B728a) protein is UPF0102 protein Psyr_4114.